The sequence spans 875 residues: cGMP-specific 3',5'-cyclic phosphodiesterase (875 aa).

Disordered stretches follow at residues 1 to 29 (MERA…DQDS) and 78 to 102 (SCSC…RKIS). Over residues 10–22 (QQRQQQQPQQQKQ) the composition is skewed to low complexity. Over residues 78-101 (SCSCPLQQSPRADNSAPGTPTRKI) the composition is skewed to polar residues. At serine 102 the chain carries Phosphoserine. GAF domains are found at residues 164–314 (DVTA…GIVL) and 346–503 (SLEV…GLGI). One can recognise a PDEase domain in the interval 536 to 860 (ETRELQSLAA…QKWQALAEQQ (325 aa)). Histidine 613 (proton donor) is an active-site residue. Residues histidine 617, histidine 653, aspartate 654, and aspartate 764 each coordinate Zn(2+). Aspartate 654 provides a ligand contact to Mg(2+). Residue glutamine 817 participates in 3',5'-cyclic GMP binding.

Belongs to the cyclic nucleotide phosphodiesterase family. The cofactor is Zn(2+). Requires Mg(2+) as cofactor. In terms of processing, phosphorylation is regulated by binding of cGMP to the two allosteric sites. Phosphorylation by PRKG1 leads to its activation. As to expression, expressed in aortic smooth muscle cells, heart, placenta, skeletal muscle and pancreas and, to a much lesser extent, in brain, liver and lung.

It carries out the reaction 3',5'-cyclic GMP + H2O = GMP + H(+). The protein operates within purine metabolism; 3',5'-cyclic GMP degradation; GMP from 3',5'-cyclic GMP: step 1/1. Sildenafil (Viagra) is a highly selective and potent inhibitor of PDE5A and is effective in the treatment of penile erectile dysfunction. Also inhibited by zaprinast. Functionally, plays a role in signal transduction by regulating the intracellular concentration of cyclic nucleotides. This phosphodiesterase catalyzes the specific hydrolysis of cGMP to 5'-GMP. Specifically regulates nitric-oxide-generated cGMP. The sequence is that of cGMP-specific 3',5'-cyclic phosphodiesterase from Homo sapiens (Human).